The chain runs to 212 residues: Thiamine-phosphate synthase (212 aa).

4-amino-2-methyl-5-(diphosphooxymethyl)pyrimidine contacts are provided by residues 40–44 and N75; that span reads QFREK. D76 and D95 together coordinate Mg(2+). S113 serves as a coordination point for 4-amino-2-methyl-5-(diphosphooxymethyl)pyrimidine. 139–141 provides a ligand contact to 2-[(2R,5Z)-2-carboxy-4-methylthiazol-5(2H)-ylidene]ethyl phosphate; the sequence is TIS. Residue K142 coordinates 4-amino-2-methyl-5-(diphosphooxymethyl)pyrimidine. 2-[(2R,5Z)-2-carboxy-4-methylthiazol-5(2H)-ylidene]ethyl phosphate contacts are provided by residues G171 and 191 to 192; that span reads IS.

It belongs to the thiamine-phosphate synthase family. Mg(2+) serves as cofactor.

The enzyme catalyses 2-[(2R,5Z)-2-carboxy-4-methylthiazol-5(2H)-ylidene]ethyl phosphate + 4-amino-2-methyl-5-(diphosphooxymethyl)pyrimidine + 2 H(+) = thiamine phosphate + CO2 + diphosphate. It catalyses the reaction 2-(2-carboxy-4-methylthiazol-5-yl)ethyl phosphate + 4-amino-2-methyl-5-(diphosphooxymethyl)pyrimidine + 2 H(+) = thiamine phosphate + CO2 + diphosphate. It carries out the reaction 4-methyl-5-(2-phosphooxyethyl)-thiazole + 4-amino-2-methyl-5-(diphosphooxymethyl)pyrimidine + H(+) = thiamine phosphate + diphosphate. The protein operates within cofactor biosynthesis; thiamine diphosphate biosynthesis; thiamine phosphate from 4-amino-2-methyl-5-diphosphomethylpyrimidine and 4-methyl-5-(2-phosphoethyl)-thiazole: step 1/1. Its function is as follows. Condenses 4-methyl-5-(beta-hydroxyethyl)thiazole monophosphate (THZ-P) and 2-methyl-4-amino-5-hydroxymethyl pyrimidine pyrophosphate (HMP-PP) to form thiamine monophosphate (TMP). The chain is Thiamine-phosphate synthase from Staphylococcus haemolyticus (strain JCSC1435).